A 593-amino-acid chain; its full sequence is Elongation factor 4 (593 aa).

The 180-residue stretch at 2 to 181 folds into the tr-type G domain; that stretch reads KNIRNFCIIA…AVVERIPHPT (180 aa). GTP contacts are provided by residues 14–19 and 128–131; these read DHGKST and NKCD.

Belongs to the TRAFAC class translation factor GTPase superfamily. Classic translation factor GTPase family. LepA subfamily.

It is found in the cell inner membrane. It carries out the reaction GTP + H2O = GDP + phosphate + H(+). Required for accurate and efficient protein synthesis under certain stress conditions. May act as a fidelity factor of the translation reaction, by catalyzing a one-codon backward translocation of tRNAs on improperly translocated ribosomes. Back-translocation proceeds from a post-translocation (POST) complex to a pre-translocation (PRE) complex, thus giving elongation factor G a second chance to translocate the tRNAs correctly. Binds to ribosomes in a GTP-dependent manner. This Phocaeicola vulgatus (strain ATCC 8482 / DSM 1447 / JCM 5826 / CCUG 4940 / NBRC 14291 / NCTC 11154) (Bacteroides vulgatus) protein is Elongation factor 4.